The primary structure comprises 192 residues: uncharacterized protein (192 aa).

The 132-residue stretch at 29-160 folds into the Nudix hydrolase domain; that stretch reads HRQAAVLIPI…PLDIYRRGDS (132 aa). The short motif at 67 to 89 is the Nudix box element; the sequence is GAVDDTDASVIAAALREAEEEVA. E83 and E87 together coordinate Mg(2+).

This sequence belongs to the Nudix hydrolase family. PCD1 subfamily. It depends on Mn(2+) as a cofactor. Requires Mg(2+) as cofactor.

Its function is as follows. Probably mediates the hydrolysis of some nucleoside diphosphate derivatives. This is an uncharacterized protein from Shigella flexneri.